Here is a 239-residue protein sequence, read N- to C-terminus: Uridylate kinase (239 aa).

Lys12–Gly15 lines the ATP pocket. Gly54 contacts UMP. The ATP site is built by Gly55 and Arg59. UMP-binding positions include Asp74 and Thr135–Thr142. The ATP site is built by Thr162, Tyr168, and Asp171.

This sequence belongs to the UMP kinase family. As to quaternary structure, homohexamer.

It is found in the cytoplasm. The enzyme catalyses UMP + ATP = UDP + ADP. The protein operates within pyrimidine metabolism; CTP biosynthesis via de novo pathway; UDP from UMP (UMPK route): step 1/1. Its activity is regulated as follows. Inhibited by UTP. Functionally, catalyzes the reversible phosphorylation of UMP to UDP. This is Uridylate kinase from Fusobacterium nucleatum subsp. nucleatum (strain ATCC 25586 / DSM 15643 / BCRC 10681 / CIP 101130 / JCM 8532 / KCTC 2640 / LMG 13131 / VPI 4355).